Consider the following 627-residue polypeptide: 1-deoxy-D-xylulose-5-phosphate synthase (627 aa).

Thiamine diphosphate is bound by residues His-80 and 121–123; that span reads GHS. Asp-152 serves as a coordination point for Mg(2+). Residues 153–154, Asn-181, Tyr-288, and Glu-370 each bind thiamine diphosphate; that span reads GA. Residue Asn-181 coordinates Mg(2+).

Belongs to the transketolase family. DXPS subfamily. In terms of assembly, homodimer. Requires Mg(2+) as cofactor. The cofactor is thiamine diphosphate.

It carries out the reaction D-glyceraldehyde 3-phosphate + pyruvate + H(+) = 1-deoxy-D-xylulose 5-phosphate + CO2. It functions in the pathway metabolic intermediate biosynthesis; 1-deoxy-D-xylulose 5-phosphate biosynthesis; 1-deoxy-D-xylulose 5-phosphate from D-glyceraldehyde 3-phosphate and pyruvate: step 1/1. Functionally, catalyzes the acyloin condensation reaction between C atoms 2 and 3 of pyruvate and glyceraldehyde 3-phosphate to yield 1-deoxy-D-xylulose-5-phosphate (DXP). The chain is 1-deoxy-D-xylulose-5-phosphate synthase from Aliivibrio salmonicida (strain LFI1238) (Vibrio salmonicida (strain LFI1238)).